Reading from the N-terminus, the 308-residue chain is MTHTLNNELLASILEQVRPLAAQGKVADYIPALADVPADRLGIAVCTVGGECFAAGDADERFSIQSISKVLSLVLAMGRYDDDEIWERVGKDPSGQPFNSLVQLELEQGKPRNPFINAGALVVCDMLQSRLSAPKQRMLEVVRNLCGAPDIIYDTAVARSEFEHSARNAAIAYLMKSFGNFHNDVITVLQNYFHYCALKMSCAELARAFLFLANQGRAPHLDTPVISPVQARQVNALMATSGMYESSGEFAWRVGMPGKSGVGGGIIAVVPHEMSIAVWSPALDHAGNSLAGIAALEILAREIGRSIF.

Substrate contacts are provided by S66, N117, E161, N168, Y192, Y244, and V262.

Belongs to the glutaminase family. As to quaternary structure, homotetramer.

The catalysed reaction is L-glutamine + H2O = L-glutamate + NH4(+). The protein is Glutaminase of Cronobacter sakazakii (strain ATCC BAA-894) (Enterobacter sakazakii).